The chain runs to 173 residues: Crossover junction endodeoxyribonuclease RuvC (173 aa).

Catalysis depends on residues D8, E67, and D139. Mg(2+)-binding residues include D8, E67, and D139.

The protein belongs to the RuvC family. Homodimer which binds Holliday junction (HJ) DNA. The HJ becomes 2-fold symmetrical on binding to RuvC with unstacked arms; it has a different conformation from HJ DNA in complex with RuvA. In the full resolvosome a probable DNA-RuvA(4)-RuvB(12)-RuvC(2) complex forms which resolves the HJ. The cofactor is Mg(2+).

The protein resides in the cytoplasm. The enzyme catalyses Endonucleolytic cleavage at a junction such as a reciprocal single-stranded crossover between two homologous DNA duplexes (Holliday junction).. Its function is as follows. The RuvA-RuvB-RuvC complex processes Holliday junction (HJ) DNA during genetic recombination and DNA repair. Endonuclease that resolves HJ intermediates. Cleaves cruciform DNA by making single-stranded nicks across the HJ at symmetrical positions within the homologous arms, yielding a 5'-phosphate and a 3'-hydroxyl group; requires a central core of homology in the junction. The consensus cleavage sequence is 5'-(A/T)TT(C/G)-3'. Cleavage occurs on the 3'-side of the TT dinucleotide at the point of strand exchange. HJ branch migration catalyzed by RuvA-RuvB allows RuvC to scan DNA until it finds its consensus sequence, where it cleaves and resolves the cruciform DNA. The sequence is that of Crossover junction endodeoxyribonuclease RuvC from Klebsiella pneumoniae (strain 342).